Consider the following 415-residue polypeptide: MVRPRRAPHRSGAGGPLGGRGRPLRPFTARAARSRSWPASPRGPQPPRIRARSAPPMQGARVFGALGPIGPSSPGLALGGLAVGEHRLSNKLLAWSGVLEWQEKRRPYSDSTAKLKRALPCQAYVNQGENLETDQWPQKLIMQLIPQQLLTTLGPLFRNSQLAQFHFTNRDCDSLKGLCRVMGNGFAGCMLFPHISPCEVRVLMLLYSSKKKIFMGLIPYDQSGFVNAIRQVITTRKQAVGPGGVAGPVQIVNNKFLAWSGVMEWQEPRPEPHSRSKRWLPSHIYVNQGEILRTEQWPRKLYMQLIPQQLLTTLVPLFRNSRLVQFHFTKDLETLKSLCRIMDNGFAGCVHFSYKASCEVRVLMLLYSSEKKIFIGLIPHDQSNFVNGIRRVIANQQQVLQRNLEQEQQQRGMGG.

The segment at 1–54 is disordered; the sequence is MVRPRRAPHRSGAGGPLGGRGRPLRPFTARAARSRSWPASPRGPQPPRIRARSA. Over residues 12 to 21 the composition is skewed to gly residues; sequence GAGGPLGGRG. Residues 24 to 40 show a composition bias toward low complexity; it reads LRPFTARAARSRSWPAS. Serine 53 carries the phosphoserine modification. Residues 184 to 415 are interaction with FLOT1; the sequence is NGFAGCMLFP…QEQQQRGMGG (232 aa).

Belongs to the Mediator complex subunit 25 family. PTOV1 subfamily. May interact with CREBBP. Interacts with FLOT1. In terms of processing, ubiquitinated by the CRL2(KLHDC2) complex, which recognizes the diglycine (Gly-Gly) at the C-terminus, leading to its degradation. Ubiquitinated by the CRL2(APPBP2) complex, which recognizes the Arg-Xaa-Xaa-Gly sequence at the C-terminus, leading to its degradation.

It is found in the cytoplasm. Its subcellular location is the nucleus. The protein localises to the cell membrane. The protein resides in the perinuclear region. May activate transcription. Required for nuclear translocation of FLOT1. Promotes cell proliferation. This Bos taurus (Bovine) protein is Prostate tumor-overexpressed gene 1 protein homolog (PTOV1).